Reading from the N-terminus, the 426-residue chain is Serine--tRNA ligase (426 aa).

235–237 provides a ligand contact to L-serine; sequence TAE. Residue 266 to 268 participates in ATP binding; it reads RRE. Residue E289 participates in L-serine binding. ATP is bound at residue 353–356; sequence EISS. Position 389 (S389) interacts with L-serine.

This sequence belongs to the class-II aminoacyl-tRNA synthetase family. Type-1 seryl-tRNA synthetase subfamily. In terms of assembly, homodimer. The tRNA molecule binds across the dimer.

It localises to the cytoplasm. The catalysed reaction is tRNA(Ser) + L-serine + ATP = L-seryl-tRNA(Ser) + AMP + diphosphate + H(+). It catalyses the reaction tRNA(Sec) + L-serine + ATP = L-seryl-tRNA(Sec) + AMP + diphosphate + H(+). It participates in aminoacyl-tRNA biosynthesis; selenocysteinyl-tRNA(Sec) biosynthesis; L-seryl-tRNA(Sec) from L-serine and tRNA(Sec): step 1/1. Functionally, catalyzes the attachment of serine to tRNA(Ser). Is also able to aminoacylate tRNA(Sec) with serine, to form the misacylated tRNA L-seryl-tRNA(Sec), which will be further converted into selenocysteinyl-tRNA(Sec). The sequence is that of Serine--tRNA ligase from Nostoc sp. (strain PCC 7120 / SAG 25.82 / UTEX 2576).